The chain runs to 494 residues: Probable malate:quinone oxidoreductase 3 (494 aa).

Belongs to the MQO family. The cofactor is FAD.

The enzyme catalyses (S)-malate + a quinone = a quinol + oxaloacetate. The protein operates within carbohydrate metabolism; tricarboxylic acid cycle; oxaloacetate from (S)-malate (quinone route): step 1/1. This Staphylococcus epidermidis (strain ATCC 35984 / DSM 28319 / BCRC 17069 / CCUG 31568 / BM 3577 / RP62A) protein is Probable malate:quinone oxidoreductase 3.